A 332-amino-acid polypeptide reads, in one-letter code: Ornithine carbamoyltransferase, catabolic (332 aa).

Residues 60–63 (STRT), Q87, R111, and 138–141 (HPTQ) contribute to the carbamoyl phosphate site. Residues N170, D230, and 234–235 (SM) each bind L-ornithine. Carbamoyl phosphate contacts are provided by residues 271–272 (CL) and R316.

It belongs to the aspartate/ornithine carbamoyltransferase superfamily. OTCase family.

The protein localises to the cytoplasm. It catalyses the reaction carbamoyl phosphate + L-ornithine = L-citrulline + phosphate + H(+). Its pathway is amino-acid degradation; L-arginine degradation via ADI pathway; carbamoyl phosphate from L-arginine: step 2/2. In terms of biological role, reversibly catalyzes the transfer of the carbamoyl group from carbamoyl phosphate (CP) to the N(epsilon) atom of ornithine (ORN) to produce L-citrulline. The protein is Ornithine carbamoyltransferase, catabolic of Bacillus cereus (strain ATCC 10987 / NRS 248).